A 281-amino-acid polypeptide reads, in one-letter code: LIM domain-containing protein G (281 aa).

3 consecutive LIM zinc-binding domains span residues 40 to 101 (LNCS…IKFN), 141 to 205 (DICT…SKQV), and 206 to 262 (NCFA…FTQP).

The protein is LIM domain-containing protein G (limG) of Dictyostelium discoideum (Social amoeba).